Reading from the N-terminus, the 3601-residue chain is Protein SPIRRIG (3601 aa).

Disordered regions lie at residues 17-50 (AQSSDSDPFPVDLTAPPSSSSSSSSPSFTYPSSS), 398-426 (SSNHDSGSDDPEVFHDGENTNSTENADFS), 449-476 (PAEPSVGRASRSSQTKPTGHSRSRTSSV), 638-657 (QYSGVSSHSDRKPSSGSFRK), 1954-1993 (HINDADDSGSQGSLPHDQDQSTKTSISVGSFPQGQVSLGS), 2009-2049 (ENIL…DFQD), and 2715-2747 (TTHVKSETGSPRHSSSAKMDETNGREEKSEKEL). Positions 32–50 (PPSSSSSSSSPSFTYPSSS) are enriched in low complexity. Polar residues-rich tracts occupy residues 416–426 (NTNSTENADFS) and 458–476 (SRSSQTKPTGHSRSRTSSV). A compositionally biased stretch (polar residues) spans 1974–1991 (STKTSISVGSFPQGQVSL). The span at 2027–2048 (EDVKKQDDHHVGPSASSERDFQ) shows a compositional bias: basic and acidic residues. Polar residues predominate over residues 2715–2731 (TTHVKSETGSPRHSSSA). The span at 2732–2747 (KMDETNGREEKSEKEL) shows a compositional bias: basic and acidic residues. The BEACH-type PH domain occupies 2760–2927 (EHLEKIRFRY…EREEVFKNLV (168 aa)). The region spanning 2952-3244 (GGRLFKLMAK…QLFPKAHVKR (293 aa)) is the BEACH domain. WD repeat units lie at residues 3328–3367 (HESNQIQCAGVSHDGRIVVTGAEDGLVCVWRVSKDGPRGS), 3378–3417 (AHTAKVTCLRVSQPYMMIASGSDDCTVIIWDLSSLSFVRQ), 3464–3507 (PSDS…DPVS), and 3540–3579 (FHKQPVTALHLTSDLKQLLSGDSAGQLLSWTVPDETLRAS).

As to quaternary structure, interacts with DCP1. As to expression, expressed in flowers, leaves, stems, hypocotyls and roots.

It is found in the cytoplasm. Its subcellular location is the P-body. Functionally, involved in cell morphogenesis. May have a function in membrane fusion or membrane composition. Required for salt stress tolerance. Regulates the salt stress-dependent post-transcriptional stabilization, cytoplasmic agglomeration, and localization to P-bodies of a subset of salt stress-regulated mRNAs. The sequence is that of Protein SPIRRIG from Arabidopsis thaliana (Mouse-ear cress).